We begin with the raw amino-acid sequence, 310 residues long: Ornithine carbamoyltransferase (310 aa).

Carbamoyl phosphate is bound by residues 57–60, Gln84, Arg108, and 135–138; these read STRT and HPCQ. Residues Asn166, Asp229, and 233–234 each bind L-ornithine; that span reads SM. Residues 269–270 and Arg297 contribute to the carbamoyl phosphate site; that span reads CL.

This sequence belongs to the aspartate/ornithine carbamoyltransferase superfamily. OTCase family.

It localises to the cytoplasm. The catalysed reaction is carbamoyl phosphate + L-ornithine = L-citrulline + phosphate + H(+). Its pathway is amino-acid biosynthesis; L-arginine biosynthesis; L-arginine from L-ornithine and carbamoyl phosphate: step 1/3. Reversibly catalyzes the transfer of the carbamoyl group from carbamoyl phosphate (CP) to the N(epsilon) atom of ornithine (ORN) to produce L-citrulline. This chain is Ornithine carbamoyltransferase, found in Thermosynechococcus vestitus (strain NIES-2133 / IAM M-273 / BP-1).